The primary structure comprises 288 residues: Bifunctional protein FolD (288 aa).

166–168 (GRS) provides a ligand contact to NADP(+).

Belongs to the tetrahydrofolate dehydrogenase/cyclohydrolase family. As to quaternary structure, homodimer.

The enzyme catalyses (6R)-5,10-methylene-5,6,7,8-tetrahydrofolate + NADP(+) = (6R)-5,10-methenyltetrahydrofolate + NADPH. It catalyses the reaction (6R)-5,10-methenyltetrahydrofolate + H2O = (6R)-10-formyltetrahydrofolate + H(+). The protein operates within one-carbon metabolism; tetrahydrofolate interconversion. Functionally, catalyzes the oxidation of 5,10-methylenetetrahydrofolate to 5,10-methenyltetrahydrofolate and then the hydrolysis of 5,10-methenyltetrahydrofolate to 10-formyltetrahydrofolate. In Levilactobacillus brevis (strain ATCC 367 / BCRC 12310 / CIP 105137 / JCM 1170 / LMG 11437 / NCIMB 947 / NCTC 947) (Lactobacillus brevis), this protein is Bifunctional protein FolD.